Here is a 565-residue protein sequence, read N- to C-terminus: Deformed epidermal autoregulatory factor 1 homolog (565 aa).

Disordered regions lie at residues 34–62 and 162–190; these read GGEA…ETPR and GLKG…KGGT. Pro residues predominate over residues 169–181; that stretch reads PLTPGPQSPPTPL. Position 171 is a phosphothreonine (threonine 171). Serine 176 carries the phosphoserine modification. The residue at position 179 (threonine 179) is a Phosphothreonine. The 81-residue stretch at 193–273 folds into the SAND domain; sequence NWDPSVYDSE…QCLIQDGILN (81 aa). A Nuclear localization signal motif is present at residues 301-316; the sequence is KRRKKENELPTTPVKK. The segment at 403 to 478 is interaction with LMO4; sequence IAPFPEAALP…QLKTLFEQAK (76 aa). Threonine 432 is modified (phosphothreonine). Serine 448 bears the Phosphoserine mark. Zn(2+)-binding residues include cysteine 504, cysteine 507, cysteine 515, cysteine 518, cysteine 524, cysteine 528, histidine 536, and cysteine 540. The segment at 504 to 540 adopts an MYND-type zinc-finger fold; it reads CVNCGREAMNECTGCHKVNYCSTFCQRKDWKDHQHIC.

In terms of assembly, homodimer. Interacts with LMO4; LMO4 blocks export from nucleus. Interacts with LMO2 and CLIM2. May interact with the corepressors NCOR1 and NCRO2. Identified in a complex with XRCC5 and XRCC6. Interacts (via the SAND domain) with the DNA-PK complex subunit XRCC6; the interaction is direct and may be inhibited by DNA-binding. May be phosphorylated by DNA-PK complex in a DNA independent manner (in vitro).

Its subcellular location is the nucleus. Its function is as follows. Transcription factor that binds to sequence with multiple copies of 5'-TTC[CG]G-3' present in its own promoter and that of the HNRPA2B1 gene. Down-regulates transcription of these genes. Binds to the retinoic acid response element (RARE) 5'-AGGGTTCACCGAAAGTTCA-3'. Activates the proenkephalin gene independently of promoter binding, probably through protein-protein interaction. Regulates epithelial cell proliferation and side-branching in the mammary gland. Required for neural tube closure and skeletal patterning. Controls the expression of peripheral tissue antigens in pancreatic lymph nodes. Transcriptional activator of EIF4G3. May also involved in behavior. In Pan troglodytes (Chimpanzee), this protein is Deformed epidermal autoregulatory factor 1 homolog (DEAF1).